The following is a 912-amino-acid chain: Receptor protein kinase WSS1 (912 aa).

A signal peptide spans 1–27 (MGRDARRLPLLPFLLLLLAAAAGVAES). The Extracellular segment spans residues 28 to 477 (ATDAEAIHDL…AGGGKSKPNT (450 aa)). LRR repeat units follow at residues 64–88 (AGKV…LSSL), 89–111 (TSLT…LARM), and 112–134 (GSLA…FLHG). N-linked (GlcNAc...) asparagine glycans are attached at residues N159, N170, N196, N256, N286, N371, N376, N387, and N400. 6 LRR repeats span residues 184–208 (LVSL…LSSL), 235–261 (MKSL…TQLE), 281–303 (LMSL…AFAA), 364–388 (SSDV…LANL), 389–411 (TRLA…VLTT), and 413–438 (PSLT…SVNV). The segment at 448 to 472 (SSGSSGGGGGSDGDSSSSDSAGGGK) is disordered. A helical transmembrane segment spans residues 478 to 498 (GMIIGIIVAVIILFACIALLV). The Cytoplasmic portion of the chain corresponds to 499–912 (HHRKKKNVEK…SFNVPRKYNG (414 aa)). In terms of domain architecture, Protein kinase spans 580 to 859 (FSEDCILGRG…HCVNRLSSLV (280 aa)). Residues 586-594 (LGRGGFGVV) and K607 contribute to the ATP site. Catalysis depends on D708, which acts as the Proton acceptor.

It belongs to the protein kinase superfamily. Ser/Thr protein kinase family. It depends on Mn(2+) as a cofactor. Expressed in young and mature leaves.

The protein resides in the cell membrane. It catalyses the reaction L-seryl-[protein] + ATP = O-phospho-L-seryl-[protein] + ADP + H(+). The enzyme catalyses L-threonyl-[protein] + ATP = O-phospho-L-threonyl-[protein] + ADP + H(+). In terms of biological role, transmembrane kinase receptor involved in the regulation of reactive oxygen species (ROS) homeostasis, chloroplast development and leaf senescence. In Oryza sativa subsp. japonica (Rice), this protein is Receptor protein kinase WSS1.